A 533-amino-acid chain; its full sequence is MSSLLPPHAQILVVGGGPAGSYCASILAREGFSVVVLEATTFPRYHIGESMLPSVRPFLKFSGADNKIASHGFCPKPGAAVKFQQHKREGYTDFSTLSSGNSPDNAAAWNVKRSEFDEILLRHAEELGAQVFENHRVINLIFADNNVSEGRPISAEFSCPNGELRSISFDYLVDASGRAGIMSTKYLKNRKFNNTLRNVASWGYWTGAKRYMPGSERDNAPFFEALTDGSGWAWFIPLHDSTVSVGIVTDQASSTARKALSARNGMHCSSKADYLAQLKLAPTVSGKFLCKATLQGENSPTCIRSASDFSYAADRYSGDHFRLIGDASAFIDPFFSSGVHLALLGALTAAASISASIRKTCSELRAAQFHDKKVAIAYTRFLLVVMGVYKQIRNQDLHILAEVDEDNFDRAFDILRPVIQGTADVGKTVSEDELQKTMDFCKDIFAPTDPQMHEAVGARLGPELCSPSVPIMTDSEIEDLTKDDNEAKLVLKEINARKAVHTMYGGPIHVAAESIDGLVLNLEVGNFGLKNVH.

The FAD site is built by glycine 16, alanine 19, and glutamate 49. Chloride contacts are provided by serine 337 and glycine 338. Valine 339 serves as a coordination point for FAD.

This sequence belongs to the flavin-dependent halogenase family.

It catalyses the reaction melleolide F + FADH2 + chloride + O2 = 6'-chloromelleolide F + FAD + 2 H2O + H(+). It carries out the reaction melleolide F + bromide + FADH2 + O2 = 6'-bromomelleolide F + FAD + 2 H2O. In terms of biological role, flavin-dependent halogenase involved in the biosynthesis of melleolides, a range of antifungal and phytotoxic polyketide derivatives composed of an orsellinic acid (OA) moiety esterified to various sesquiterpene alcohols. The halogenase catalyzes the transfer of a single chlorine atom to the melleolide backbone, resulting in a 6'-chloromelleolide product. The enzyme acts on free substrate and does not depend on carrier-protein-dependent acceptor molecules. Can also catalyze the transfer of a single bromine atom to the melleolide backbone in vitro. The sequence is that of Flavin-dependent halogenase armH4 from Armillaria mellea (Honey mushroom).